Reading from the N-terminus, the 2476-residue chain is Zonadhesin (2476 aa).

A signal peptide spans 1–29 (MLGLPALAGPMAMPHPPLIPSTPTLLAFS). Over 30 to 2418 (FPGGFYMLLD…SPKKPEASNR (2389 aa)) the chain is Extracellular. 2 MAM domains span residues 31 to 144 (PGGF…PCEE) and 147 to 312 (PQCD…TCRG). N-linked (GlcNAc...) asparagine glycosylation is found at asparagine 109 and asparagine 269. Disordered stretches follow at residues 313-332 (PSET…KPTV), 358-462 (PTVP…TERT), and 537-632 (ERTT…RTTI). The tract at residues 319 to 687 (STEKPVAPTE…ATTVTPRTTI (369 aa)) is 53 X approximate heptapeptide repeats (mucin-like domain). The span at 358 to 373 (PTVPTEKPTIPTEKST) shows a compositional bias: low complexity. Residues 400–412 (TTPPEGPAVPPKG) show a composition bias toward pro residues. Basic and acidic residues predominate over residues 423 to 433 (HTEKSTVHTEK). Positions 451–462 (PTKRTTTPTERT) are enriched in low complexity. Positions 690-739 (CPPNAHFERCACPVSCQSPTPNCELFCKPGCVCDPGFLFSGSHCVNASSC) constitute a TIL 1 domain. Asparagine 735, asparagine 758, and asparagine 833 each carry an N-linked (GlcNAc...) asparagine glycan. The VWFC 1 domain maps to 740–794 (DCFYNDNYYKLGTDWFSPNCTEHCHCRPSSRMECQTFKCGTHTVCQLKNGQYGCH). The 178-residue stretch at 799–976 (ATCSVYGDPH…TSEDADQQCE (178 aa)) folds into the VWFD 1 domain. Disulfide bonds link cysteine 801–cysteine 936 and cysteine 823–cysteine 975. Residues 943–983 (SSNDNQKPDGSPAKDEKELGSSWQTSEDADQQCEENQVSPP) are disordered. The 54-residue stretch at 1070–1123 (CPRNSRYTLCARLCPDTCHSEFSGRACKDRCVEGCECDPGFVLSGLQCVSRSEC) folds into the TIL 2 domain. One can recognise a VWFC 2 domain in the interval 1124-1180 (GCLDSTAGYVKVGERWFKPGCRQLCICEGNNRTRCVLWRCQAQEFCGQQDGIYGCHA). Residue asparagine 1154 is glycosylated (N-linked (GlcNAc...) asparagine). One can recognise a VWFD 2 domain in the interval 1184–1364 (ATCTVSGDPH…INELSEPGCF (181 aa)). Disulfide bonds link cysteine 1186–cysteine 1324 and cysteine 1208–cysteine 1363. Residues asparagine 1329 and asparagine 1448 are each glycosylated (N-linked (GlcNAc...) asparagine). A TIL 3 domain is found at 1456-1511 (CPSGSSYSTCANPCPATCLSLNNPSYCPSTLPCAEGCECQKGHILSGTSCVPLSQC). The 57-residue stretch at 1512 to 1568 (GCTTQRGSYHPVGESWYTDNSCSRLCTCSAHNNISCRQASCKPSQMCWPQDGLIRCR) folds into the VWFC 3 domain. N-linked (GlcNAc...) asparagine glycans are attached at residues asparagine 1544, asparagine 1596, and asparagine 1654. The VWFD 3 domain maps to 1573–1751 (GVCRIPDTSH…RDKEIDPNCQ (179 aa)). Cystine bridges form between cysteine 1575/cysteine 1712 and cysteine 1597/cysteine 1750. A compositionally biased stretch (basic and acidic residues) spans 1747 to 1759 (DPNCQEDDRKTEA). Residues 1747–1768 (DPNCQEDDRKTEAESQEQPSAN) form a disordered region. Asparagine 1843 is a glycosylation site (N-linked (GlcNAc...) asparagine). A TIL 4 domain is found at 1851 to 1907 (CSAHSVYTSCVPSCLPSCQDPEGQCTGAGAPSTCEEGCICEPGYVLSEQQCVARSQC). The region spanning 1908-1963 (GCRDARGTFLPVGRFRLSSGCSQMCVCTAGAIECRPFTCPSGSQCEPNEDGKDFCQ) is the VWFC 4 domain. N-linked (GlcNAc...) asparagine glycosylation is present at asparagine 1965. Residues 1968 to 2145 (NLCSVFGDPH…WEVKAKEGHP (178 aa)) enclose the VWFD 4 domain. Residues cysteine 1970 and cysteine 2107 are joined by a disulfide bond. Residues asparagine 2122, asparagine 2165, and asparagine 2178 are each glycosylated (N-linked (GlcNAc...) asparagine). Positions 2257 to 2310 (CPANTVYQSCMTPCPASCATLAVPRACDGPCVEGCASLPGYIYSGAQSLPMAHC) constitute a TIL 5 domain. In terms of domain architecture, VWFC 5 spans 2311 to 2365 (GCTNNGVYYQQGDSFVTENCSQRCTCASSGVLLCEPLSCRPGEICTLGNLTRGCF). Asparagine 2329 and asparagine 2359 each carry an N-linked (GlcNAc...) asparagine glycan. Positions 2366-2402 (RDSPCLQNPCQNDGRCREQGTHFTCECELGYGGDLCT) constitute an EGF-like domain. Intrachain disulfides connect cysteine 2370–cysteine 2381, cysteine 2375–cysteine 2390, and cysteine 2392–cysteine 2401. The helical transmembrane segment at 2419-2439 (VAILLGMLMPTVLLVPAVTRV) threads the bilayer. Positions 2438–2476 (RVSRKRRRRRRPSRERTQSQNRGKRAGTDCAPEQAYKVA) are disordered. The span at 2439–2450 (VSRKRRRRRRPS) shows a compositional bias: basic residues. The Cytoplasmic portion of the chain corresponds to 2440–2476 (SRKRRRRRRPSRERTQSQNRGKRAGTDCAPEQAYKVA).

As to quaternary structure, probably forms covalent oligomers. Post-translationally, the MAM domains and the mucin-like domains are missing from the zonadhesin that binds to the egg extracellular matrix. Processing might occur during sperm maturation and/or capacitation. In terms of tissue distribution, in testis, primarily in haploid spermatids. Not in lung, liver, heart, spleen, brain, kidney, epididymis.

The protein localises to the cell membrane. Its function is as follows. Binds in a species-specific manner to the zona pellucida of the egg. May be involved in gamete recognition and/or signaling. In Sus scrofa (Pig), this protein is Zonadhesin (ZAN).